A 341-amino-acid chain; its full sequence is Phosphate acyltransferase (341 aa).

The protein belongs to the PlsX family. As to quaternary structure, homodimer. Probably interacts with PlsY.

The protein resides in the cytoplasm. It carries out the reaction a fatty acyl-[ACP] + phosphate = an acyl phosphate + holo-[ACP]. It functions in the pathway lipid metabolism; phospholipid metabolism. Functionally, catalyzes the reversible formation of acyl-phosphate (acyl-PO(4)) from acyl-[acyl-carrier-protein] (acyl-ACP). This enzyme utilizes acyl-ACP as fatty acyl donor, but not acyl-CoA. In Vibrio campbellii (strain ATCC BAA-1116), this protein is Phosphate acyltransferase.